The following is a 75-amino-acid chain: UPF0346 protein LGAS_0911 (75 aa).

It belongs to the UPF0346 family.

The protein is UPF0346 protein LGAS_0911 of Lactobacillus gasseri (strain ATCC 33323 / DSM 20243 / BCRC 14619 / CIP 102991 / JCM 1131 / KCTC 3163 / NCIMB 11718 / NCTC 13722 / AM63).